The chain runs to 430 residues: Probable folylpolyglutamate synthase (430 aa).

37-40 (GKET) is an ATP binding site. E132 lines the Mg(2+) pocket. Residue D300 participates in ATP binding.

Belongs to the folylpolyglutamate synthase family.

Its subcellular location is the mitochondrion. The enzyme catalyses (6S)-5,6,7,8-tetrahydrofolyl-(gamma-L-Glu)(n) + L-glutamate + ATP = (6S)-5,6,7,8-tetrahydrofolyl-(gamma-L-Glu)(n+1) + ADP + phosphate + H(+). The protein operates within cofactor biosynthesis; tetrahydrofolylpolyglutamate biosynthesis. In terms of biological role, conversion of folates to polyglutamate derivatives. This Saccharomyces cerevisiae (strain ATCC 204508 / S288c) (Baker's yeast) protein is Probable folylpolyglutamate synthase (RMA1).